A 233-amino-acid polypeptide reads, in one-letter code: Apoptosis regulator Bcl-2 (233 aa).

Positions 10–30 (DNREIVLKYIHYKLSQRGYDW) match the BH4 motif. The tract at residues 32–86 (AGEDRPPVPPAPAPAAAPAAVAAAGASSHHRPEPPGSAAASEVPPAEGLRPAPPG) is disordered. A BH3 motif is present at residues 87 to 101 (VHLALRQAGDEFSRR). The short motif at 130 to 149 (ELFRDGVNWGRIVAFFEFGG) is the BH1 element. The BH2 motif lies at 181-196 (NWIQDNGGWDAFVELY). The helical transmembrane segment at 208–228 (WISLKTILSLVLVGACITLGA) threads the bilayer.

It belongs to the Bcl-2 family. Forms homodimers, and heterodimers with BAX, BAD, BAK and Bcl-X(L). Heterodimerization with BAX requires intact BH1 and BH2 motifs, and is necessary for anti-apoptotic activity. Also interacts with APAF1 and RAF-1. As to expression, in adult chicken expressed, in thymus, spleen, kidney, heart, ovary and brain, with the highest levels in the thymus. In the embryo, highly levels expressed in all tissues with high levels in the bursa of Fabricius.

It is found in the mitochondrion outer membrane. The protein resides in the nucleus membrane. It localises to the endoplasmic reticulum membrane. The protein localises to the cytoplasm. Its function is as follows. Suppresses apoptosis in a variety of cell systems including factor-dependent lymphohematopoietic and neural cells. Regulates cell death by controlling the mitochondrial membrane permeability. Appears to function in a feedback loop system with caspases. Inhibits caspase activity either by preventing the release of cytochrome c from the mitochondria and/or by binding to the apoptosis-activating factor (APAF-1). This chain is Apoptosis regulator Bcl-2 (BCL2), found in Gallus gallus (Chicken).